We begin with the raw amino-acid sequence, 835 residues long: Ribosome-releasing factor 2, mitochondrial (835 aa).

The transit peptide at Met-1 to Tyr-50 directs the protein to the mitochondrion. A tr-type G domain is found at Thr-57–Ala-343. GTP-binding positions include Ala-66–Thr-73, Asp-131–His-135, and Asn-183–Asp-186.

The protein belongs to the TRAFAC class translation factor GTPase superfamily. Classic translation factor GTPase family. EF-G/EF-2 subfamily.

The protein resides in the mitochondrion. Mitochondrial GTPase that mediates the disassembly of ribosomes from messenger RNA at the termination of mitochondrial protein biosynthesis. Not involved in the GTP-dependent ribosomal translocation step during translation elongation. This Eremothecium gossypii (strain ATCC 10895 / CBS 109.51 / FGSC 9923 / NRRL Y-1056) (Yeast) protein is Ribosome-releasing factor 2, mitochondrial.